A 165-amino-acid chain; its full sequence is Minor capsid protein VP2 (165 aa).

It belongs to the sapovirus VP2 family. Homooligomer. The portal-like structure consists in 12 copies of VP2. Interacts with capsid protein VP1.

The protein localises to the virion. It is found in the host cytoplasm. Minor structural protein that forms a portal-like structure at a unique three-fold axis of symmetry, following binding to the host receptor. The channel formed by VP2 may allow the delivery of the viral genome through the host endosomal membrane. This is Minor capsid protein VP2 from Homo sapiens (Human).